A 349-amino-acid chain; its full sequence is Phosphoribosylformylglycinamidine cyclo-ligase (349 aa).

The protein belongs to the AIR synthase family.

The protein localises to the cytoplasm. The enzyme catalyses 2-formamido-N(1)-(5-O-phospho-beta-D-ribosyl)acetamidine + ATP = 5-amino-1-(5-phospho-beta-D-ribosyl)imidazole + ADP + phosphate + H(+). Its pathway is purine metabolism; IMP biosynthesis via de novo pathway; 5-amino-1-(5-phospho-D-ribosyl)imidazole from N(2)-formyl-N(1)-(5-phospho-D-ribosyl)glycinamide: step 2/2. This chain is Phosphoribosylformylglycinamidine cyclo-ligase, found in Bordetella avium (strain 197N).